The following is a 191-amino-acid chain: Orotate phosphoribosyltransferase (191 aa).

A 5-phospho-alpha-D-ribose 1-diphosphate-binding site is contributed by 114-122 (EDVVTTGKS). Residues T118 and R146 each contribute to the orotate site.

It belongs to the purine/pyrimidine phosphoribosyltransferase family. PyrE subfamily. In terms of assembly, homodimer. Mg(2+) is required as a cofactor.

It catalyses the reaction orotidine 5'-phosphate + diphosphate = orotate + 5-phospho-alpha-D-ribose 1-diphosphate. The protein operates within pyrimidine metabolism; UMP biosynthesis via de novo pathway; UMP from orotate: step 1/2. In terms of biological role, catalyzes the transfer of a ribosyl phosphate group from 5-phosphoribose 1-diphosphate to orotate, leading to the formation of orotidine monophosphate (OMP). The protein is Orotate phosphoribosyltransferase of Clostridium botulinum (strain Langeland / NCTC 10281 / Type F).